A 196-amino-acid chain; its full sequence is Nucleoid occlusion factor SlmA (196 aa).

An HTH tetR-type domain is found at 7-68 (TNRREEILQA…GLIEFIEDSI (62 aa)). The segment at residues 31 to 50 (TTAKLAAQVGVSEAALYRHF) is a DNA-binding region (H-T-H motif). Residues 115-142 (EQDRLQSRINQLFERIETQLRQVLRERK) are a coiled coil.

This sequence belongs to the nucleoid occlusion factor SlmA family. Homodimer. Interacts with FtsZ.

Its subcellular location is the cytoplasm. It localises to the nucleoid. In terms of biological role, required for nucleoid occlusion (NO) phenomenon, which prevents Z-ring formation and cell division over the nucleoid. Acts as a DNA-associated cell division inhibitor that binds simultaneously chromosomal DNA and FtsZ, and disrupts the assembly of FtsZ polymers. SlmA-DNA-binding sequences (SBS) are dispersed on non-Ter regions of the chromosome, preventing FtsZ polymerization at these regions. The chain is Nucleoid occlusion factor SlmA from Photobacterium profundum (strain SS9).